The chain runs to 209 residues: Molybdenum cofactor guanylyltransferase (209 aa).

Residues 14 to 16 (LAG), Lys31, and Asp104 contribute to the GTP site. Asp104 contacts Mg(2+).

This sequence belongs to the MobA family. In terms of assembly, monomer. Mg(2+) is required as a cofactor.

Its subcellular location is the cytoplasm. The catalysed reaction is Mo-molybdopterin + GTP + H(+) = Mo-molybdopterin guanine dinucleotide + diphosphate. Its function is as follows. Transfers a GMP moiety from GTP to Mo-molybdopterin (Mo-MPT) cofactor (Moco or molybdenum cofactor) to form Mo-molybdopterin guanine dinucleotide (Mo-MGD) cofactor. This chain is Molybdenum cofactor guanylyltransferase, found in Helicobacter pylori (strain J99 / ATCC 700824) (Campylobacter pylori J99).